We begin with the raw amino-acid sequence, 261 residues long: Hydroxyethylthiazole kinase (261 aa).

Methionine 38 is a binding site for substrate. 2 residues coordinate ATP: arginine 114 and threonine 159. Substrate is bound at residue glycine 186.

It belongs to the Thz kinase family. The cofactor is Mg(2+).

The catalysed reaction is 5-(2-hydroxyethyl)-4-methylthiazole + ATP = 4-methyl-5-(2-phosphooxyethyl)-thiazole + ADP + H(+). The protein operates within cofactor biosynthesis; thiamine diphosphate biosynthesis; 4-methyl-5-(2-phosphoethyl)-thiazole from 5-(2-hydroxyethyl)-4-methylthiazole: step 1/1. Its function is as follows. Catalyzes the phosphorylation of the hydroxyl group of 4-methyl-5-beta-hydroxyethylthiazole (THZ). The sequence is that of Hydroxyethylthiazole kinase from Halalkalibacterium halodurans (strain ATCC BAA-125 / DSM 18197 / FERM 7344 / JCM 9153 / C-125) (Bacillus halodurans).